The following is a 426-amino-acid chain: MTSSVIAQSVFPYRQLLVGFSGGLDSTVLLHRLMLWREQEPDVQIRAIHVHHGLSSNADHWVAHCESLCKSWHIPLIVERVKLRDEGLGTEAQARKARYLAFEKTLQAGEALVTAQHLDDQCETFLLALKRGSGPAGLSAMPVRTEFAGSQLIRPLLGETRTSLEKWAQDYNLCWIDDESNQDDRYDRNFLRLRVLPLLSERWPHFADATARSAALCAEQESLLDELLTEELASVISTEGRLRIEPLEAMSPVRRAALIRRWLAAHHAQMPSRTMLNRIWEEVALAREDATPRLHLGGFEVRRYKGELWWVKYQPTMIDQIIEWRDPSVTLMLPQGSVCFADGGHIRLPNPDEQVTIRFKACGILHIVGRHGGRKLKKIWQEYNIPPWLRDTTPLLFYGETLIAAAGVFVTKEGWIEKGVQLEWKA.

21–26 is an ATP binding site; sequence SGGLDS.

Belongs to the tRNA(Ile)-lysidine synthase family.

It is found in the cytoplasm. It catalyses the reaction cytidine(34) in tRNA(Ile2) + L-lysine + ATP = lysidine(34) in tRNA(Ile2) + AMP + diphosphate + H(+). Functionally, ligates lysine onto the cytidine present at position 34 of the AUA codon-specific tRNA(Ile) that contains the anticodon CAU, in an ATP-dependent manner. Cytidine is converted to lysidine, thus changing the amino acid specificity of the tRNA from methionine to isoleucine. This Enterobacter sp. (strain 638) protein is tRNA(Ile)-lysidine synthase.